The primary structure comprises 226 residues: Orotidine 5'-phosphate decarboxylase (226 aa).

Substrate is bound by residues Asp-9, Lys-31, 58-67 (DLKLYDIPNT), Thr-115, Arg-176, Gln-184, Gly-204, and Arg-205. Residue Lys-60 is the Proton donor of the active site.

This sequence belongs to the OMP decarboxylase family. Type 1 subfamily. Homodimer.

It carries out the reaction orotidine 5'-phosphate + H(+) = UMP + CO2. It functions in the pathway pyrimidine metabolism; UMP biosynthesis via de novo pathway; UMP from orotate: step 2/2. In terms of biological role, catalyzes the decarboxylation of orotidine 5'-monophosphate (OMP) to uridine 5'-monophosphate (UMP). The chain is Orotidine 5'-phosphate decarboxylase from Wolbachia pipientis subsp. Culex pipiens (strain wPip).